The chain runs to 469 residues: Glutamate--tRNA ligase (469 aa).

A 'HIGH' region motif is present at residues 9 to 19 (PSPTGFLHVGG). Zn(2+) contacts are provided by Cys-98, Cys-100, Cys-125, and Asp-127. The short motif at 236–240 (KLSKR) is the 'KMSKS' region element. Lys-239 provides a ligand contact to ATP.

Belongs to the class-I aminoacyl-tRNA synthetase family. Glutamate--tRNA ligase type 1 subfamily. Monomer. Requires Zn(2+) as cofactor.

It localises to the cytoplasm. The enzyme catalyses tRNA(Glu) + L-glutamate + ATP = L-glutamyl-tRNA(Glu) + AMP + diphosphate. Its function is as follows. Catalyzes the attachment of glutamate to tRNA(Glu) in a two-step reaction: glutamate is first activated by ATP to form Glu-AMP and then transferred to the acceptor end of tRNA(Glu). The protein is Glutamate--tRNA ligase of Shewanella putrefaciens (strain CN-32 / ATCC BAA-453).